Reading from the N-terminus, the 509-residue chain is L-arabinose isomerase (509 aa).

Residues glutamate 313, glutamate 340, histidine 357, and histidine 456 each contribute to the Mn(2+) site.

It belongs to the arabinose isomerase family. Mn(2+) is required as a cofactor.

It carries out the reaction beta-L-arabinopyranose = L-ribulose. The protein operates within carbohydrate degradation; L-arabinose degradation via L-ribulose; D-xylulose 5-phosphate from L-arabinose (bacterial route): step 1/3. In terms of biological role, catalyzes the conversion of L-arabinose to L-ribulose. The sequence is that of L-arabinose isomerase from Bacteroides thetaiotaomicron (strain ATCC 29148 / DSM 2079 / JCM 5827 / CCUG 10774 / NCTC 10582 / VPI-5482 / E50).